The primary structure comprises 146 residues: Probable glycine cleavage system H protein 3 (146 aa).

Residues 29 to 111 (VVSVGMTDLG…PYGSWIIKVS (83 aa)) enclose the Lipoyl-binding domain. Lys-71 is subject to N6-lipoyllysine.

It belongs to the GcvH family. In terms of assembly, the glycine cleavage system is composed of four proteins: P, T, L and H. The cofactor is (R)-lipoate.

Functionally, the glycine cleavage system catalyzes the degradation of glycine. The H protein shuttles the methylamine group of glycine from the P protein to the T protein. The sequence is that of Probable glycine cleavage system H protein 3 from Sulfolobus acidocaldarius (strain ATCC 33909 / DSM 639 / JCM 8929 / NBRC 15157 / NCIMB 11770).